A 255-amino-acid polypeptide reads, in one-letter code: Hydroxyacylglutathione hydrolase (255 aa).

Positions 55, 57, 59, 60, 112, 129, and 167 each coordinate Zn(2+).

This sequence belongs to the metallo-beta-lactamase superfamily. Glyoxalase II family. In terms of assembly, monomer. Zn(2+) serves as cofactor.

It carries out the reaction an S-(2-hydroxyacyl)glutathione + H2O = a 2-hydroxy carboxylate + glutathione + H(+). It functions in the pathway secondary metabolite metabolism; methylglyoxal degradation; (R)-lactate from methylglyoxal: step 2/2. Its function is as follows. Thiolesterase that catalyzes the hydrolysis of S-D-lactoyl-glutathione to form glutathione and D-lactic acid. The protein is Hydroxyacylglutathione hydrolase of Halorhodospira halophila (strain DSM 244 / SL1) (Ectothiorhodospira halophila (strain DSM 244 / SL1)).